The chain runs to 124 residues: Large ribosomal subunit protein bL19 (124 aa).

Belongs to the bacterial ribosomal protein bL19 family.

Its function is as follows. This protein is located at the 30S-50S ribosomal subunit interface and may play a role in the structure and function of the aminoacyl-tRNA binding site. This is Large ribosomal subunit protein bL19 from Orientia tsutsugamushi (strain Ikeda) (Rickettsia tsutsugamushi).